An 859-amino-acid polypeptide reads, in one-letter code: Mismatch repair endonuclease PMS2 (859 aa).

5 residues coordinate ATP: Asn-45, Asp-70, Glu-109, Ala-110, and Leu-111. Disordered stretches follow at residues 391–413 (ELEK…ADEK), 427–455 (LHPT…RGVL), and 469–555 (RGSQ…KPED). Composition is skewed to basic and acidic residues over residues 427-439 (LHPT…RGPE) and 485-495 (CMDREKIEKDS). Polar residues predominate over residues 512-525 (EVASSFSSDYNVSS). Residues 574–577 (KRFK) carry the Nuclear localization signal motif. Residues 578-597 (TEERPSNVNISQRLPGPQST) are disordered. Polar residues predominate over residues 583-597 (SNVNISQRLPGPQST).

The protein belongs to the DNA mismatch repair MutL/HexB family. As to quaternary structure, heterodimer of PMS2 and MLH1 (MutL alpha); this interaction is required for the stability of both partners. Forms a ternary complex with MutS alpha (MSH2-MSH6) or MutS beta (MSH2-MSH3). Part of the BRCA1-associated genome surveillance complex (BASC), which contains BRCA1, MSH2, MSH6, MLH1, ATM, BLM, PMS2 and the RAD50-MRE11-NBS1 protein complex. This association could be a dynamic process changing throughout the cell cycle and within subnuclear domains. Interacts with MTMR15/FAN1.

It localises to the nucleus. The enzyme catalyses ATP + H2O = ADP + phosphate + H(+). Functionally, component of the post-replicative DNA mismatch repair system (MMR). Heterodimerizes with MLH1 to form MutL alpha. DNA repair is initiated by MutS alpha (MSH2-MSH6) or MutS beta (MSH2-MSH3) binding to a dsDNA mismatch, then MutL alpha is recruited to the heteroduplex. Assembly of the MutL-MutS-heteroduplex ternary complex in presence of RFC and PCNA is sufficient to activate endonuclease activity of PMS2. It introduces single-strand breaks near the mismatch and thus generates new entry points for the exonuclease EXO1 to degrade the strand containing the mismatch. DNA methylation would prevent cleavage and therefore assure that only the newly mutated DNA strand is going to be corrected. MutL alpha (MLH1-PMS2) interacts physically with the clamp loader subunits of DNA polymerase III, suggesting that it may play a role to recruit the DNA polymerase III to the site of the MMR. Also implicated in DNA damage signaling, a process which induces cell cycle arrest and can lead to apoptosis in case of major DNA damages. Possesses an ATPase activity, but in the absence of gross structural changes, ATP hydrolysis may not be necessary for proficient mismatch repair. The sequence is that of Mismatch repair endonuclease PMS2 from Mus musculus (Mouse).